Here is a 1099-residue protein sequence, read N- to C-terminus: Carbamoyl phosphate synthase large chain (1099 aa).

Residues 1-402 (MPKRTDLKSV…ALQKALRSLE (402 aa)) are carboxyphosphate synthetic domain. The ATP site is built by arginine 129, arginine 169, glycine 175, glycine 176, glutamate 208, isoleucine 210, glutamate 215, glycine 241, valine 242, histidine 243, glutamine 285, and glutamate 299. The ATP-grasp 1 domain maps to 133–328 (KGVVERCGAE…IAKIATKLSL (196 aa)). Mg(2+) contacts are provided by glutamine 285, glutamate 299, and asparagine 301. Mn(2+) contacts are provided by glutamine 285, glutamate 299, and asparagine 301. Residues 403 to 546 (QKGSQLDFSH…YHYSSYDEED (144 aa)) are oligomerization domain. The tract at residues 547 to 950 (EVALHSKPSI…AFAKSQAAAN (404 aa)) is carbamoyl phosphate synthetic domain. Residues 677 to 868 (SRVLDEAGLI…MAKAAALIGT (192 aa)) form the ATP-grasp 2 domain. ATP contacts are provided by arginine 713, arginine 752, leucine 754, glutamate 759, glycine 784, isoleucine 785, histidine 786, serine 787, glutamine 827, and glutamate 839. Glutamine 827, glutamate 839, and asparagine 841 together coordinate Mg(2+). Mn(2+) contacts are provided by glutamine 827, glutamate 839, and asparagine 841. An MGS-like domain is found at 951-1099 (NALPTEGKIF…AENLKALQNG (149 aa)). The segment at 951–1099 (NALPTEGKIF…AENLKALQNG (149 aa)) is allosteric domain.

It belongs to the CarB family. In terms of assembly, composed of two chains; the small (or glutamine) chain promotes the hydrolysis of glutamine to ammonia, which is used by the large (or ammonia) chain to synthesize carbamoyl phosphate. Tetramer of heterodimers (alpha,beta)4. The cofactor is Mg(2+). Mn(2+) serves as cofactor.

It catalyses the reaction hydrogencarbonate + L-glutamine + 2 ATP + H2O = carbamoyl phosphate + L-glutamate + 2 ADP + phosphate + 2 H(+). It carries out the reaction hydrogencarbonate + NH4(+) + 2 ATP = carbamoyl phosphate + 2 ADP + phosphate + 2 H(+). The protein operates within amino-acid biosynthesis; L-arginine biosynthesis; carbamoyl phosphate from bicarbonate: step 1/1. It functions in the pathway pyrimidine metabolism; UMP biosynthesis via de novo pathway; (S)-dihydroorotate from bicarbonate: step 1/3. Its function is as follows. Large subunit of the glutamine-dependent carbamoyl phosphate synthetase (CPSase). CPSase catalyzes the formation of carbamoyl phosphate from the ammonia moiety of glutamine, carbonate, and phosphate donated by ATP, constituting the first step of 2 biosynthetic pathways, one leading to arginine and/or urea and the other to pyrimidine nucleotides. The large subunit (synthetase) binds the substrates ammonia (free or transferred from glutamine from the small subunit), hydrogencarbonate and ATP and carries out an ATP-coupled ligase reaction, activating hydrogencarbonate by forming carboxy phosphate which reacts with ammonia to form carbamoyl phosphate. This is Carbamoyl phosphate synthase large chain from Arthrobacter sp. (strain FB24).